A 92-amino-acid chain; its full sequence is Small ribosomal subunit protein uS19c (92 aa).

It belongs to the universal ribosomal protein uS19 family.

The protein localises to the plastid. It is found in the chloroplast. Protein S19 forms a complex with S13 that binds strongly to the 16S ribosomal RNA. This is Small ribosomal subunit protein uS19c (rps19) from Pinus thunbergii (Japanese black pine).